The sequence spans 225 residues: UPF0758 protein swp_2203 (225 aa).

The MPN domain occupies 102–224; sequence ILSDPDLTRD…IVSFAERGWI (123 aa). 3 residues coordinate Zn(2+): His-173, His-175, and Asp-186. The JAMM motif signature appears at 173–186; it reads HNHPSGIAEPSTAD.

It belongs to the UPF0758 family.

This chain is UPF0758 protein swp_2203, found in Shewanella piezotolerans (strain WP3 / JCM 13877).